Here is a 290-residue protein sequence, read N- to C-terminus: Syntaxin-2 (290 aa).

Residues 1-266 lie on the Cytoplasmic side of the membrane; sequence MRDRLPDLTA…KYQSKARRKK (266 aa). A Phosphoserine modification is found at serine 14. Residues 69–106 adopt a coiled-coil conformation; sequence EGKIKEELEDLNKEIKKTANRIRGKLKAIEQSCDQDEN. The region spanning 193 to 255 is the t-SNARE coiled-coil homology domain; it reads LNEIESRHKD…EHAKEETKKA (63 aa). A helical; Anchor for type IV membrane protein transmembrane segment spans residues 267 to 290; that stretch reads WIIAAVVVAVIAVLALIIGLTVGK.

It belongs to the syntaxin family. As to quaternary structure, interacts with SYT6 and SYT8; the interaction is Ca(2+)-dependent. In terms of tissue distribution, heart, spleen, liver, and testis.

It is found in the membrane. In terms of biological role, essential for epithelial morphogenesis. May mediate Ca(2+)-regulation of exocytosis acrosomal reaction in sperm. The sequence is that of Syntaxin-2 (Stx2) from Rattus norvegicus (Rat).